The sequence spans 307 residues: tRNA(Met) cytidine acetate ligase (307 aa).

Residues 12–25 (VVEY…HIYQ), Gly106, Asn163, and Arg188 each bind ATP.

The protein belongs to the TmcAL family.

The protein localises to the cytoplasm. The catalysed reaction is cytidine(34) in elongator tRNA(Met) + acetate + ATP = N(4)-acetylcytidine(34) in elongator tRNA(Met) + AMP + diphosphate. Its function is as follows. Catalyzes the formation of N(4)-acetylcytidine (ac(4)C) at the wobble position of elongator tRNA(Met), using acetate and ATP as substrates. First activates an acetate ion to form acetyladenylate (Ac-AMP) and then transfers the acetyl group to tRNA to form ac(4)C34. This Mycoplasmopsis synoviae (strain 53) (Mycoplasma synoviae) protein is tRNA(Met) cytidine acetate ligase.